Reading from the N-terminus, the 167-residue chain is ATP synthase subunit b (167 aa).

Residues 7–25 (SFLLAVSFVIFIYLIYRPA) traverse the membrane as a helical segment.

This sequence belongs to the ATPase B chain family. As to quaternary structure, F-type ATPases have 2 components, F(1) - the catalytic core - and F(0) - the membrane proton channel. F(1) has five subunits: alpha(3), beta(3), gamma(1), delta(1), epsilon(1). F(0) has three main subunits: a(1), b(2) and c(10-14). The alpha and beta chains form an alternating ring which encloses part of the gamma chain. F(1) is attached to F(0) by a central stalk formed by the gamma and epsilon chains, while a peripheral stalk is formed by the delta and b chains.

The protein resides in the cell inner membrane. Its function is as follows. F(1)F(0) ATP synthase produces ATP from ADP in the presence of a proton or sodium gradient. F-type ATPases consist of two structural domains, F(1) containing the extramembraneous catalytic core and F(0) containing the membrane proton channel, linked together by a central stalk and a peripheral stalk. During catalysis, ATP synthesis in the catalytic domain of F(1) is coupled via a rotary mechanism of the central stalk subunits to proton translocation. Component of the F(0) channel, it forms part of the peripheral stalk, linking F(1) to F(0). In Rickettsia typhi (strain ATCC VR-144 / Wilmington), this protein is ATP synthase subunit b.